Here is a 420-residue protein sequence, read N- to C-terminus: Histidine--tRNA ligase (420 aa).

Belongs to the class-II aminoacyl-tRNA synthetase family. Homodimer.

It is found in the cytoplasm. It carries out the reaction tRNA(His) + L-histidine + ATP = L-histidyl-tRNA(His) + AMP + diphosphate + H(+). This chain is Histidine--tRNA ligase, found in Anaplasma phagocytophilum (strain HZ).